Consider the following 391-residue polypeptide: Chaperone protein DnaJ (391 aa).

Positions 2 to 67 (DYYDVLGVSK…QKRESYDRYG (66 aa)) constitute a J domain. The CR-type zinc finger occupies 148 to 226 (GVEKELLVSG…CRGQGRVKDK (79 aa)). Positions 161, 164, 178, 181, 200, 203, 214, and 217 each coordinate Zn(2+). 4 CXXCXGXG motif repeats span residues 161-168 (CTTCSGSG), 178-185 (CERCKGSG), 200-207 (CPECGGEG), and 214-221 (CSNCRGQG).

This sequence belongs to the DnaJ family. In terms of assembly, homodimer. It depends on Zn(2+) as a cofactor.

Its subcellular location is the cytoplasm. Its function is as follows. Participates actively in the response to hyperosmotic and heat shock by preventing the aggregation of stress-denatured proteins and by disaggregating proteins, also in an autonomous, DnaK-independent fashion. Unfolded proteins bind initially to DnaJ; upon interaction with the DnaJ-bound protein, DnaK hydrolyzes its bound ATP, resulting in the formation of a stable complex. GrpE releases ADP from DnaK; ATP binding to DnaK triggers the release of the substrate protein, thus completing the reaction cycle. Several rounds of ATP-dependent interactions between DnaJ, DnaK and GrpE are required for fully efficient folding. Also involved, together with DnaK and GrpE, in the DNA replication of plasmids through activation of initiation proteins. The sequence is that of Chaperone protein DnaJ from Chlamydia felis (strain Fe/C-56) (Chlamydophila felis).